A 304-amino-acid chain; its full sequence is uncharacterized protein (304 aa).

Belongs to the histone deacetylase family.

Its function is as follows. Putative deacetylase. This is an uncharacterized protein from Synechocystis sp. (strain ATCC 27184 / PCC 6803 / Kazusa).